The chain runs to 433 residues: 3-phosphoshikimate 1-carboxyvinyltransferase (433 aa).

3-phosphoshikimate is bound by residues Lys-22, Ser-23, and Arg-27. Lys-22 is a binding site for phosphoenolpyruvate. Positions 94 and 123 each coordinate phosphoenolpyruvate. The 3-phosphoshikimate site is built by Ser-168, Gln-170, Asp-319, and Lys-346. Residue Gln-170 participates in phosphoenolpyruvate binding. Asp-319 serves as the catalytic Proton acceptor. Phosphoenolpyruvate-binding residues include Arg-350 and Arg-392.

It belongs to the EPSP synthase family. As to quaternary structure, monomer.

The protein resides in the cytoplasm. It catalyses the reaction 3-phosphoshikimate + phosphoenolpyruvate = 5-O-(1-carboxyvinyl)-3-phosphoshikimate + phosphate. Its pathway is metabolic intermediate biosynthesis; chorismate biosynthesis; chorismate from D-erythrose 4-phosphate and phosphoenolpyruvate: step 6/7. Functionally, catalyzes the transfer of the enolpyruvyl moiety of phosphoenolpyruvate (PEP) to the 5-hydroxyl of shikimate-3-phosphate (S3P) to produce enolpyruvyl shikimate-3-phosphate and inorganic phosphate. The protein is 3-phosphoshikimate 1-carboxyvinyltransferase of Roseiflexus sp. (strain RS-1).